Consider the following 483-residue polypeptide: Glutathione reductase (483 aa).

M1 carries the post-translational modification N-acetylmethionine. Position 2 is an N-acetylserine (L2). The FAD site is built by S33 and G34. S33 serves as a coordination point for glutathione. R40 is a binding site for glutathione. The FAD site is built by E53, T60, C61, and K69. Cysteines 61 and 66 form a disulfide. Y123 is a binding site for glutathione. FAD is bound at residue A139. Positions 205, 208, 211, 228, and 234 each coordinate NADP(+). Residue T243 coordinates glutathione. Residue N278 is glycosylated (N-linked (GlcNAc...) asparagine). G294 lines the NADP(+) pocket. D334 is a binding site for FAD. E340 is an NADP(+) binding site. T342 contributes to the FAD binding site. Glutathione is bound at residue R350. V375 is an NADP(+) binding site. Position 425 (K425) interacts with glutathione. Position 472 (H472) interacts with FAD. Residue H472 is the Proton acceptor of the active site.

Belongs to the class-I pyridine nucleotide-disulfide oxidoreductase family. As to quaternary structure, homodimer. Requires FAD as cofactor.

It localises to the cytoplasm. Its subcellular location is the nucleus. The protein resides in the mitochondrion. The protein localises to the peroxisome. The catalysed reaction is 2 glutathione + NADP(+) = glutathione disulfide + NADPH + H(+). Functionally, catalyzes the reduction of glutathione disulfide (GSSG) to reduced glutathione (GSH). Constitutes the major mechanism to maintain a high GSH:GSSG ratio in the cytosol. The chain is Glutathione reductase from Saccharomyces cerevisiae (strain ATCC 204508 / S288c) (Baker's yeast).